Consider the following 736-residue polypeptide: Subtilisin-like protease SBT1.9 (736 aa).

An N-terminal signal peptide occupies residues 1–20 (MGMTVVIILVFSFFVAIVTA). Positions 21–101 (ETSPYIIHMD…FTKDLPVKLH (81 aa)) are cleaved as a propeptide — activation peptide. Residues 25–101 (YIIHMDLSAK…FTKDLPVKLH (77 aa)) form the Inhibitor I9 domain. The 480-residue stretch at 103–582 (TFSPKFIGLN…AGHVSTNKVL (480 aa)) folds into the Peptidase S8 domain. Asn112 carries N-linked (GlcNAc...) asparagine glycosylation. Residue Asp133 is the Charge relay system of the active site. Residue Asn162 is glycosylated (N-linked (GlcNAc...) asparagine). The Charge relay system role is filled by His205. Residues Asn220, Asn381, and Asn453 are each glycosylated (N-linked (GlcNAc...) asparagine). In terms of domain architecture, PA spans 367-441 (VQFPVTYIES…VAFIGSKHRE (75 aa)). The Charge relay system role is filled by Ser529. Residue Asn617 is glycosylated (N-linked (GlcNAc...) asparagine).

The protein belongs to the peptidase S8 family.

The protein localises to the secreted. In Arabidopsis thaliana (Mouse-ear cress), this protein is Subtilisin-like protease SBT1.9.